Consider the following 229-residue polypeptide: Probable transmembrane reductase CYB561D1 (229 aa).

Topologically, residues 1–24 (MQPLEVGLVPAPAGEPRLTRWLRR) are cytoplasmic. The 203-residue stretch at 22 to 224 (LRRGSGILAH…HQISRSYLPR (203 aa)) folds into the Cytochrome b561 domain. The chain crosses the membrane as a helical span at residues 25-45 (GSGILAHLVALGFTIFLTALS). The Lumenal segment spans residues 46 to 53 (RPGTSLFS). A helical transmembrane segment spans residues 54-74 (WHPVFMALAFCLCMAEAILLF). A heme b-binding site is contributed by histidine 55. Over 75 to 91 (SPEHSLFFFCSRKARIR) the chain is Cytoplasmic. Residues 92–112 (LHWAGQTLAILCAALGLGFII) form a helical membrane-spanning segment. Heme b contacts are provided by histidine 93 and histidine 127. At 113–128 (SSRTRSELPHLVSWHS) the chain is on the lumenal side. Residues 129 to 149 (WVGALTLLATAVQALCGLCLL) form a helical membrane-spanning segment. At 150 to 169 (CPRAARVSRVARLKLYHLTC) the chain is on the cytoplasmic side. Histidine 166 contributes to the heme b binding site. The chain crosses the membrane as a helical span at residues 170 to 190 (GLVVYLMATVTVLLGMYSVWF). The Lumenal segment spans residues 191–193 (QAQ). Residues 194–214 (IKGAAWYLCLALPVYPALVIM) traverse the membrane as a helical segment. Topologically, residues 215–229 (HQISRSYLPRKKMEM) are cytoplasmic.

It depends on heme b as a cofactor.

It localises to the membrane. The catalysed reaction is monodehydro-L-ascorbate radical(out) + L-ascorbate(in) = monodehydro-L-ascorbate radical(in) + L-ascorbate(out). It catalyses the reaction Fe(3+)(out) + L-ascorbate(in) = monodehydro-L-ascorbate radical(in) + Fe(2+)(out) + H(+). In terms of biological role, probable transmembrane reductase that may use ascorbate as an electron donor and transfer electrons across membranes to reduce monodehydro-L-ascorbate radical and iron cations Fe(3+) in another cellular compartment. This Homo sapiens (Human) protein is Probable transmembrane reductase CYB561D1.